Consider the following 299-residue polypeptide: Protein charybde (299 aa).

A disordered region spans residues 73 to 103; the sequence is LNTRPSATPPSAGGGGPLAGGGSVGMTTPKQ. Over residues 84–96 the composition is skewed to gly residues; the sequence is AGGGGPLAGGGSV.

This sequence belongs to the DDIT4 family.

The protein resides in the cytoplasm. In terms of biological role, inhibits cell growth by regulating the Tor pathway upstream of the Tsc1-Tsc2 complex and downstream of Akt1. Acts as a cell death activator during head development. The protein is Protein charybde (chrb) of Drosophila melanogaster (Fruit fly).